Reading from the N-terminus, the 124-residue chain is Cytoinsectotoxin-4 (124 aa).

The N-terminal stretch at 1–19 is a signal peptide; sequence MKCFILAAALVLAFACIAA. Positions 20 to 62 are excised as a propeptide; sequence SEPAETENEDLDDLSDLEDEEWLDELEEAAEYLESLREFEESR. F123 is modified (phenylalanine amide).

It belongs to the cationic peptide 06 (cytoinsectotoxin) family. In terms of tissue distribution, expressed by the venom gland.

The protein localises to the secreted. In terms of biological role, insecticidal and antimicrobial peptide. Has insecticidal activity against larvae of flesh fly S.carnaria. Has antibacterial activity against Gram-positive bacterium B.subtilis B-501 (MIC=2.5 uM) and Gram-negative bacterium E.coli DH5alpha (MIC=10 uM). In Lachesana tarabaevi (Spider), this protein is Cytoinsectotoxin-4.